A 261-amino-acid chain; its full sequence is Cytochrome c oxidase subunit 3 (261 aa).

The Mitochondrial matrix portion of the chain corresponds to 1–15; that stretch reads MTHQTHAYHMVNPSP. A helical membrane pass occupies residues 16–34; sequence WPLTGALSALLMTSGLIMW. Residues 35–40 lie on the Mitochondrial intermembrane side of the membrane; the sequence is FHFNSM. The helical transmembrane segment at 41–66 threads the bilayer; that stretch reads YLLMLGLTTNTLTMYQWWRDIVREST. The Mitochondrial matrix segment spans residues 67–72; sequence FQGHHT. Residues 73-105 traverse the membrane as a helical segment; it reads PIVQKGLRYGMILFIVSEVFFFAGFFWAFYHSS. Residues 106–128 lie on the Mitochondrial intermembrane side of the membrane; sequence LAPTPELGGCWPPTGITPLNPME. A helical transmembrane segment spans residues 129-152; sequence VPLLNTSVLLASGVSITWAHHSLM. Topologically, residues 153–155 are mitochondrial matrix; it reads EGN. Residues 156–183 form a helical membrane-spanning segment; it reads RKHMLQALFITISLGVYFTLLQASEYYE. At 184-190 the chain is on the mitochondrial intermembrane side; it reads TPFTISD. A helical membrane pass occupies residues 191-223; it reads GIYGSTFFMATGFHGLHVIIGSTFLIVCFMRQL. Over 224-232 the chain is Mitochondrial matrix; that stretch reads KFHFTSNHH. A helical transmembrane segment spans residues 233–256; sequence FGFEAAAWYWHFVDVVWLFLYVSI. Residues 257 to 261 are Mitochondrial intermembrane-facing; it reads YWWGS.

It belongs to the cytochrome c oxidase subunit 3 family. Component of the cytochrome c oxidase (complex IV, CIV), a multisubunit enzyme composed of 14 subunits. The complex is composed of a catalytic core of 3 subunits MT-CO1, MT-CO2 and MT-CO3, encoded in the mitochondrial DNA, and 11 supernumerary subunits COX4I, COX5A, COX5B, COX6A, COX6B, COX6C, COX7A, COX7B, COX7C, COX8 and NDUFA4, which are encoded in the nuclear genome. The complex exists as a monomer or a dimer and forms supercomplexes (SCs) in the inner mitochondrial membrane with NADH-ubiquinone oxidoreductase (complex I, CI) and ubiquinol-cytochrome c oxidoreductase (cytochrome b-c1 complex, complex III, CIII), resulting in different assemblies (supercomplex SCI(1)III(2)IV(1) and megacomplex MCI(2)III(2)IV(2)).

The protein resides in the mitochondrion inner membrane. It catalyses the reaction 4 Fe(II)-[cytochrome c] + O2 + 8 H(+)(in) = 4 Fe(III)-[cytochrome c] + 2 H2O + 4 H(+)(out). Its function is as follows. Component of the cytochrome c oxidase, the last enzyme in the mitochondrial electron transport chain which drives oxidative phosphorylation. The respiratory chain contains 3 multisubunit complexes succinate dehydrogenase (complex II, CII), ubiquinol-cytochrome c oxidoreductase (cytochrome b-c1 complex, complex III, CIII) and cytochrome c oxidase (complex IV, CIV), that cooperate to transfer electrons derived from NADH and succinate to molecular oxygen, creating an electrochemical gradient over the inner membrane that drives transmembrane transport and the ATP synthase. Cytochrome c oxidase is the component of the respiratory chain that catalyzes the reduction of oxygen to water. Electrons originating from reduced cytochrome c in the intermembrane space (IMS) are transferred via the dinuclear copper A center (CU(A)) of subunit 2 and heme A of subunit 1 to the active site in subunit 1, a binuclear center (BNC) formed by heme A3 and copper B (CU(B)). The BNC reduces molecular oxygen to 2 water molecules using 4 electrons from cytochrome c in the IMS and 4 protons from the mitochondrial matrix. This is Cytochrome c oxidase subunit 3 (MT-CO3) from Halichoerus grypus (Gray seal).